The chain runs to 410 residues: LL-diaminopimelate aminotransferase (410 aa).

Residues Tyr15 and Gly42 each contribute to the substrate site. Residues Tyr72, 108 to 109, Tyr132, Asn187, Tyr218, and 246 to 248 contribute to the pyridoxal 5'-phosphate site; these read AK and SFS. 3 residues coordinate substrate: Lys109, Tyr132, and Asn187. An N6-(pyridoxal phosphate)lysine modification is found at Lys249. Pyridoxal 5'-phosphate-binding residues include Arg257 and Asn292. Asn292 and Arg388 together coordinate substrate.

The protein belongs to the class-I pyridoxal-phosphate-dependent aminotransferase family. LL-diaminopimelate aminotransferase subfamily. As to quaternary structure, homodimer. Pyridoxal 5'-phosphate serves as cofactor.

It carries out the reaction (2S,6S)-2,6-diaminopimelate + 2-oxoglutarate = (S)-2,3,4,5-tetrahydrodipicolinate + L-glutamate + H2O + H(+). Its pathway is amino-acid biosynthesis; L-lysine biosynthesis via DAP pathway; LL-2,6-diaminopimelate from (S)-tetrahydrodipicolinate (aminotransferase route): step 1/1. Its function is as follows. Involved in the synthesis of meso-diaminopimelate (m-DAP or DL-DAP), required for both lysine and peptidoglycan biosynthesis. Catalyzes the direct conversion of tetrahydrodipicolinate to LL-diaminopimelate. Can also use m-DAP instead of LL-DAP as the amino-group donor. In Acetivibrio thermocellus (strain ATCC 27405 / DSM 1237 / JCM 9322 / NBRC 103400 / NCIMB 10682 / NRRL B-4536 / VPI 7372) (Clostridium thermocellum), this protein is LL-diaminopimelate aminotransferase.